The following is a 929-amino-acid chain: Band 3 anion transport protein (929 aa).

Methionine 1 is modified (N-acetylmethionine). Over 1 to 422 (MGDMRDHEEV…LSDITDALSP (422 aa)) the chain is Cytoplasmic. Serine 18 is modified (phosphoserine). A phosphotyrosine mark is found at tyrosine 31 and tyrosine 56. A disordered region spans residues 46 to 67 (ALPTEQTATDYVPSSTSTPHPS). A compositionally biased stretch (low complexity) spans 58–67 (PSSTSTPHPS). The tract at residues 69–303 (GQVYVELQEL…LGRAAATLMT (235 aa)) is globular. An interaction with ANK1 region spans residues 190 to 199 (AVLTRSGGAS). 3 positions are modified to phosphoserine: serine 199, serine 222, and serine 363. The tract at residues 317-370 (REELLRSLESFLDCSLVLPPTDAPSEKALLNLVPVQKELLRRRYLPSPAKPDPN) is dimerization arm. The disordered stretch occupies residues 366–389 (KPDPNLYNTLDLNGGKGGPGDEDD). The residue at position 372 (tyrosine 372) is a Phosphotyrosine. Phosphothreonine is present on threonine 374. The helical transmembrane segment at 423-446 (QVLAAVIFIYFAALSPAVTFGGLL) threads the bilayer. Over 447-454 (GEKTRNLM) the chain is Extracellular. Residues 455-475 (GVSELLISTAVQGILFALLGA) traverse the membrane as a helical segment. Over 476–478 (QPL) the chain is Cytoplasmic. The discontinuously helical transmembrane segment at 479–495 (LVLGFSGPLLVFEEAFF) threads the bilayer. Residues 496–504 (SFCESNNLE) are Extracellular-facing. The chain crosses the membrane as a helical span at residues 505–525 (YIVGRAWIGFWLILLVMLVVA). Over 526-537 (FEGSFLVQYISR) the chain is Cytoplasmic. The chain crosses the membrane as a helical span at residues 538 to 560 (YTQEIFSFLISLIFIYETFSKLI). Topologically, residues 561–588 (KIFQDYPLQQTYAPVVMKPKPQGPVPNT) are extracellular. A helical membrane pass occupies residues 589 to 609 (ALFSLVLMAGTFLLAMTLRKF). The Cytoplasmic segment spans residues 610-620 (KNSTYFPGKLR). Residues 621–641 (RVIGDFGVPISILIMVLVDSF) traverse the membrane as a helical segment. Over 642–681 (IKGTYTQKLSVPDGLKVSNSSARGWVIHPLGLYRLFPTWM) the chain is Extracellular. An N-linked (GlcNAc...) asparagine glycan is attached at asparagine 660. A helical transmembrane segment spans residues 682–702 (MFASVLPALLVFILIFLESQI). Over 703-718 (TTLIVSKPERKMIKGS) the chain is Cytoplasmic. The chain crosses the membrane as a helical span at residues 719-737 (GFHLDLLLVVGMGGVAALF). Residues 738-755 (GMPWLSATTVRSVTHANA) traverse the membrane as a discontinuously helical segment. Residues 756-778 (LTVMGKASGPGAAAQIQEVKEQR) are Cytoplasmic-facing. Transmembrane regions (helical) follow at residues 779–799 (ISGL…PILS) and 800–818 (RIPL…VTSL). Over 819 to 856 (SGIQLFDRILLLFKPPKYHPDVPFVKRVKTWRMHLFTG) the chain is Cytoplasmic. The segment at residues 857 to 887 (IQIICLAVLWVVKSTPASLALPFVLILTVPL) is an intramembrane region (discontinuously helical). Cysteine 861 carries the S-palmitoyl cysteine lipid modification. The Cytoplasmic segment spans residues 888–929 (RRLILPLIFRELELQCLDGDDAKVTFDEENGLDEYDEVPMPV). Tyrosine 922 bears the Phosphotyrosine mark.

It belongs to the anion exchanger (TC 2.A.31) family. In terms of assembly, a dimer in solution, but in its membrane environment, it exists primarily as a mixture of dimers and tetramers and spans the membrane asymmetrically. Component of the ankyrin-1 complex in the erythrocyte, composed of ANK1, RHCE, RHAG, SLC4A1, EPB42, GYPA, GYPB and AQP1. Interacts with STOM; this interaction positively regulates SLC4A1 activity. Interacts with GYPA; a GYPA monomer is bound at each end of the SLC4A1 dimer forming a heterotetramer. Three SLC4A1 dimers (Band 3-I, Band 3-II and Band 3-III) participates in the ankyrin-1 complex. Interacts (via the cytoplasmic domain) with EPB42; this interaction is mediated by the SLC4A1 Band 3-I dimer. Interacts (via the cytoplasmic domain) directly with ANK1; this interaction is mediated by the SLC4A1 Band 3-II and Band 3-III dimers. Interacts with TMEM139. As to expression, detected in erythrocytes (at protein level).

It is found in the cell membrane. Its subcellular location is the basolateral cell membrane. The enzyme catalyses hydrogencarbonate(in) + chloride(out) = hydrogencarbonate(out) + chloride(in). Its function is as follows. Functions both as a transporter that mediates electroneutral anion exchange across the cell membrane and as a structural protein. Component of the ankyrin-1 complex of the erythrocyte membrane; required for normal flexibility and stability of the erythrocyte membrane and for normal erythrocyte shape via the interactions of its cytoplasmic domain with cytoskeletal proteins, glycolytic enzymes, and hemoglobin. Functions as a transporter that mediates the 1:1 exchange of inorganic anions across the erythrocyte membrane. Mediates chloride-bicarbonate exchange in the kidney, and is required for normal acidification of the urine. This chain is Band 3 anion transport protein, found in Mus musculus (Mouse).